We begin with the raw amino-acid sequence, 84 residues long: Antitoxin VapB30 (84 aa).

In terms of biological role, antitoxin component of a type II toxin-antitoxin (TA) system. Upon expression in M.smegmatis neutralizes the effect of cognate toxin VapC30. The sequence is that of Antitoxin VapB30 (vapB30) from Mycobacterium tuberculosis (strain ATCC 25618 / H37Rv).